The following is a 686-amino-acid chain: Putative cuticle collagen 99 (686 aa).

Disordered stretches follow at residues 42–79 (PPIGNSDDNSDDVAKSRKVRNSCMCPPGPPGERGPVGP) and 163–444 (GPIG…SLVA). Positions 67-79 (PPGPPGERGPVGP) are enriched in pro residues. 3 triple-helical region regions span residues 142–201 (GMPG…KGDR), 230–263 (GPPGPPGPPGPPGPAGRDGRHGMKGDRGLPGFDG), and 268–296 (GPKGETGNPGRDGIPGARGPPGERGEKGD). Over residues 231 to 243 (PPGPPGPPGPPGP) the composition is skewed to pro residues. Residues 246–256 (RDGRHGMKGDR) show a composition bias toward basic and acidic residues. Residues 306–318 (GQSVSTVSSSGSQ) are compositionally biased toward low complexity. 2 stretches are compositionally biased toward basic and acidic residues: residues 361-373 (EKGERGERGETGD) and 401-417 (RDGRPGEKGEKGEHGLR). The triple-helical region stretch occupies residues 394–439 (GPPGPPGRDGRPGEKGEKGEHGLRGDMGLPGPEGTPGKRGRRGRHG). Residues N446 and N535 are each glycosylated (N-linked (GlcNAc...) asparagine). The segment at 475 to 650 (KNVIPGPPGP…TGPDGLPLPY (176 aa)) is disordered. Triple-helical region stretches follow at residues 479–536 (PGPP…SGNQ), 538–576 (GPRGPPGLPGPPGEKGDLGPPGLPGQPGALGLPGHPGPM), and 577–636 (GLRG…PGLD). Over residues 540–549 (RGPPGLPGPP) the composition is skewed to pro residues. The segment covering 563–581 (QPGALGLPGHPGPMGLRGP) has biased composition (low complexity).

The protein belongs to the cuticular collagen family. As to quaternary structure, collagen polypeptide chains are complexed within the cuticle by disulfide bonds and other types of covalent cross-links.

In terms of biological role, nematode cuticles are composed largely of collagen-like proteins. The cuticle functions both as an exoskeleton and as a barrier to protect the worm from its environment. The protein is Putative cuticle collagen 99 of Caenorhabditis briggsae.